The following is a 435-amino-acid chain: Keratin, type I cytoskeletal 18 (435 aa).

The segment at 2–84 (SYRPGSYSVS…SVSGSGLVGN (83 aa)) is head. A coil 1A region spans residues 85-120 (EKETMIGLNDRLAAYLETVRNLEQANSKLEFQIREA). The 312-residue stretch at 85-396 (EKETMIGLND…RLLDGEDFRL (312 aa)) folds into the IF rod domain. The tract at residues 121 to 137 (LEKKGPTTRDLSPFEKT) is linker 1. Residues 138-229 (LEDLRKKVYD…QNHNQEVNDL (92 aa)) form a coil 1B region. The linker 12 stretch occupies residues 230–253 (RNQIAQSGVQVDVDAPKGQDLAQV). The coil 2 stretch occupies residues 254-391 (LAEVRAQYES…IATYRRLLDG (138 aa)). The tail stretch occupies residues 392–435 (EDFRLQDALVDQSSTKSIKKVTVTQTLVDGKVVSESTNTKEIGK).

Belongs to the intermediate filament family. As to quaternary structure, heterotetramer of two type I and two type II keratins. Keratin-18 associates with keratin-8. Phosphorylated. Post-translationally, proteolytically cleaved by caspases during epithelial cell apoptosis.

In terms of biological role, when phosphorylated, plays a role in filament reorganization. In Acipenser baerii (Siberian sturgeon), this protein is Keratin, type I cytoskeletal 18.